Reading from the N-terminus, the 60-residue chain is Large ribosomal subunit protein uL30 (60 aa).

It belongs to the universal ribosomal protein uL30 family. In terms of assembly, part of the 50S ribosomal subunit.

The sequence is that of Large ribosomal subunit protein uL30 from Polaromonas sp. (strain JS666 / ATCC BAA-500).